Reading from the N-terminus, the 278-residue chain is Large ribosomal subunit protein uL2 (278 aa).

Disordered stretches follow at residues 1 to 58 and 225 to 278; these read MAIR…GGGH and VMNP…KNKR. Basic residues predominate over residues 37–58; that stretch reads LHGRGGRNAHGRITTRHKGGGH. Residues 253–267 are compositionally biased toward basic and acidic residues; the sequence is PEGRTRKNKASDKMI. Positions 268–278 are enriched in basic residues; it reads VRRRRTGKNKR.

It belongs to the universal ribosomal protein uL2 family. In terms of assembly, part of the 50S ribosomal subunit. Forms a bridge to the 30S subunit in the 70S ribosome.

Functionally, one of the primary rRNA binding proteins. Required for association of the 30S and 50S subunits to form the 70S ribosome, for tRNA binding and peptide bond formation. It has been suggested to have peptidyltransferase activity; this is somewhat controversial. Makes several contacts with the 16S rRNA in the 70S ribosome. The sequence is that of Large ribosomal subunit protein uL2 from Rhodococcus erythropolis (strain PR4 / NBRC 100887).